The sequence spans 197 residues: Imidazoleglycerol-phosphate dehydratase (197 aa).

This sequence belongs to the imidazoleglycerol-phosphate dehydratase family.

Its subcellular location is the cytoplasm. The enzyme catalyses D-erythro-1-(imidazol-4-yl)glycerol 3-phosphate = 3-(imidazol-4-yl)-2-oxopropyl phosphate + H2O. It functions in the pathway amino-acid biosynthesis; L-histidine biosynthesis; L-histidine from 5-phospho-alpha-D-ribose 1-diphosphate: step 6/9. The polypeptide is Imidazoleglycerol-phosphate dehydratase (Nitrosomonas europaea (strain ATCC 19718 / CIP 103999 / KCTC 2705 / NBRC 14298)).